We begin with the raw amino-acid sequence, 171 residues long: Adenine phosphoribosyltransferase (171 aa).

It belongs to the purine/pyrimidine phosphoribosyltransferase family. As to quaternary structure, homodimer.

Its subcellular location is the cytoplasm. The catalysed reaction is AMP + diphosphate = 5-phospho-alpha-D-ribose 1-diphosphate + adenine. Its pathway is purine metabolism; AMP biosynthesis via salvage pathway; AMP from adenine: step 1/1. Functionally, catalyzes a salvage reaction resulting in the formation of AMP, that is energically less costly than de novo synthesis. This chain is Adenine phosphoribosyltransferase, found in Nitrosococcus oceani (strain ATCC 19707 / BCRC 17464 / JCM 30415 / NCIMB 11848 / C-107).